The primary structure comprises 155 residues: Putative pre-16S rRNA nuclease (155 aa).

Belongs to the YqgF nuclease family.

It localises to the cytoplasm. Its function is as follows. Could be a nuclease involved in processing of the 5'-end of pre-16S rRNA. The polypeptide is Putative pre-16S rRNA nuclease (Xanthomonas axonopodis pv. citri (strain 306)).